A 212-amino-acid polypeptide reads, in one-letter code: tRNA (guanine-N(7)-)-methyltransferase (212 aa).

S-adenosyl-L-methionine is bound by residues Glu-44, Glu-69, Asp-96, and Asp-118. Asp-118 is a catalytic residue. Lys-122 is a binding site for substrate. The interval 124 to 129 is interaction with RNA; the sequence is RHEKRR. Residues Asp-154 and 192–195 each bind substrate; that span reads TEYE.

This sequence belongs to the class I-like SAM-binding methyltransferase superfamily. TrmB family.

The enzyme catalyses guanosine(46) in tRNA + S-adenosyl-L-methionine = N(7)-methylguanosine(46) in tRNA + S-adenosyl-L-homocysteine. It functions in the pathway tRNA modification; N(7)-methylguanine-tRNA biosynthesis. Its function is as follows. Catalyzes the formation of N(7)-methylguanine at position 46 (m7G46) in tRNA. In Pediococcus pentosaceus (strain ATCC 25745 / CCUG 21536 / LMG 10740 / 183-1w), this protein is tRNA (guanine-N(7)-)-methyltransferase.